A 532-amino-acid polypeptide reads, in one-letter code: Flavin-containing monooxygenase 3 (532 aa).

FAD is bound by residues 9–13 (GAGVS), Glu-32, 40–41 (LW), and 61–62 (NS). Residues 60–61 (TN) and 195–198 (SGCD) contribute to the NADP(+) site. A Phosphoserine modification is found at Ser-401. Residues 512-532 (CHLVKLFVLPVLFIAVFLALI) form a helical membrane-spanning segment.

This sequence belongs to the FMO family. It depends on FAD as a cofactor.

It localises to the microsome membrane. The protein resides in the endoplasmic reticulum membrane. It carries out the reaction trimethylamine + NADPH + O2 = trimethylamine N-oxide + NADP(+) + H2O. It catalyses the reaction N,N-dimethylaniline + NADPH + O2 + H(+) = N,N-dimethylaniline N-oxide + NADP(+) + H2O. The catalysed reaction is hypotaurine + NADPH + O2 + H(+) = taurine + NADP(+) + H2O. The enzyme catalyses (S)-nicotine + NADPH + O2 = trans-(S)-nicotine N(1')-oxide + NADP(+) + H2O. It carries out the reaction albendazole + NADPH + O2 + H(+) = albendazole S-oxide + NADP(+) + H2O. In terms of biological role, essential hepatic enzyme that catalyzes the oxygenation of a wide variety of nitrogen- and sulfur-containing compounds including drugs as well as dietary compounds. Plays an important role in the metabolism of trimethylamine (TMA), via the production of trimethylamine N-oxide (TMAO) metabolite. TMA is generated by the action of gut microbiota using dietary precursors such as choline, choline containing compounds, betaine or L-carnitine. By regulating TMAO concentration, FMO3 directly impacts both platelet responsiveness and rate of thrombus formation. This chain is Flavin-containing monooxygenase 3 (FMO3), found in Canis lupus familiaris (Dog).